Consider the following 228-residue polypeptide: Ephrin-A5 (228 aa).

The signal sequence occupies residues 1–20; sequence MLHVEMLTLVFLVLWMCVFS. An Ephrin RBD domain is found at 29-162; that stretch reads ADRYAVYWNS…KLKVFVRPTN (134 aa). The N-linked (GlcNAc...) asparagine glycan is linked to Asn-37. Intrachain disulfides connect Cys-62–Cys-102 and Cys-90–Cys-151. The interval 186-205 is disordered; sequence EPADDTVHESAEPSRGENAA. Positions 190–200 are enriched in basic and acidic residues; that stretch reads DTVHESAEPSR. The GPI-anchor amidated asparagine moiety is linked to residue Asn-203. The propeptide at 204-228 is removed in mature form; it reads AAQTPRIPSRLLAILLFLLAMLLTL.

Belongs to the ephrin family. As to quaternary structure, binds to EPHB2. Interacts with EPHA8; activates EPHA8. Binds to the receptor tyrosine kinases EPHA2, EPHA3 and EPHB1. Forms a ternary EFNA5-EPHA3-ADAM10 complex mediating EFNA5 extracellular domain shedding by ADAM10 which regulates the EFNA5-EPHA3 complex internalization and function.

It is found in the cell membrane. Its subcellular location is the membrane. It localises to the caveola. Functionally, cell surface GPI-bound ligand for Eph receptors, a family of receptor tyrosine kinases which are crucial for migration, repulsion and adhesion during neuronal, vascular and epithelial development. Binds promiscuously Eph receptors residing on adjacent cells, leading to contact-dependent bidirectional signaling into neighboring cells. The signaling pathway downstream of the receptor is referred to as forward signaling while the signaling pathway downstream of the ephrin ligand is referred to as reverse signaling. Induces compartmentalized signaling within a caveolae-like membrane microdomain when bound to the extracellular domain of its cognate receptor. This signaling event requires the activity of the Fyn tyrosine kinase. Activates the EPHA3 receptor to regulate cell-cell adhesion and cytoskeletal organization. With the receptor EPHA2 may regulate lens fiber cells shape and interactions and be important for lens transparency maintenance. May function actively to stimulate axon fasciculation. The interaction of EFNA5 with EPHA5 also mediates communication between pancreatic islet cells to regulate glucose-stimulated insulin secretion. Cognate/functional ligand for EPHA7, their interaction regulates brain development modulating cell-cell adhesion and repulsion. The chain is Ephrin-A5 (EFNA5) from Homo sapiens (Human).